Consider the following 1159-residue polypeptide: WASH complex subunit 5 (1159 aa).

Ser-917 carries the post-translational modification Phosphoserine.

Belongs to the strumpellin family. In terms of assembly, component of the WASH core complex also described as WASH regulatory complex (SHRC) composed of WASH (WASHC1, WASH2P or WASH3P), WASHC2 (WASHC2A or WASHC2C), WASHC3, WASHC4 and WASHC5. The WASH core complex associates via WASHC2 with the F-actin-capping protein dimer (formed by CAPZA1, CAPZA2 or CAPZA3 and CAPZB) in a transient or substoichiometric manner which was initially described as WASH complex. Interacts with VCP, PI4K2A.

It is found in the cytoplasm. The protein localises to the cytosol. The protein resides in the endoplasmic reticulum. Its subcellular location is the early endosome. In terms of biological role, acts as a component of the WASH core complex that functions as a nucleation-promoting factor (NPF) at the surface of endosomes, where it recruits and activates the Arp2/3 complex to induce actin polymerization, playing a key role in the fission of tubules that serve as transport intermediates during endosome sorting. May be involved in axonal outgrowth. Involved in cellular localization of ADRB2. Involved in cellular trafficking of BLOC-1 complex cargos such as ATP7A and VAMP7. This Pongo abelii (Sumatran orangutan) protein is WASH complex subunit 5.